Reading from the N-terminus, the 256-residue chain is Small ribosomal subunit protein eS1 (256 aa).

The segment covering 1–18 (MAVGKNKRLSKGKKGLKK) has biased composition (basic residues). A disordered region spans residues 1-20 (MAVGKNKRLSKGKKGLKKRT). Alanine 2 carries the post-translational modification N-acetylalanine; partial.

Belongs to the eukaryotic ribosomal protein eS1 family. In terms of assembly, component of the small ribosomal subunit. Mature ribosomes consist of a small (40S) and a large (60S) subunit. The 40S subunit contains about 33 different proteins and 1 molecule of RNA (18S). The 60S subunit contains about 49 different proteins and 3 molecules of RNA (25S, 5.8S and 5S).

It localises to the cytoplasm. The chain is Small ribosomal subunit protein eS1 (rps1) from Talaromyces marneffei (strain ATCC 18224 / CBS 334.59 / QM 7333) (Penicillium marneffei).